Consider the following 810-residue polypeptide: Bifunctional aspartokinase/homoserine dehydrogenase 2 (810 aa).

Residues 2-252 (SVIAQAGAKG…VKDACLLPLL (251 aa)) form an aspartokinase region. The interval 253-463 (RLDEASELAR…RAEKRIGLVL (211 aa)) is interface. The segment at 464 to 810 (FGKGNIGSRW…SDINRLAQLL (347 aa)) is homoserine dehydrogenase. NADP(+) is bound by residues asparagine 468 and isoleucine 469. NAD(+)-binding residues include isoleucine 469 and valine 498. Residue isoleucine 469 participates in NADPH binding. NADP(+) is bound by residues arginine 501, threonine 549, and lysine 573. Position 549 (threonine 549) interacts with NAD(+). The NADPH site is built by threonine 549 and lysine 573. Residues valine 603, alanine 605, and leucine 607 each contribute to the Na(+) site. Residues glycine 658 and glutamate 661 each coordinate NADP(+). Residues glutamate 661 and aspartate 672 each contribute to the L-homoserine site. The active-site Proton donor is lysine 676. Glycine 791 lines the NADP(+) pocket. Position 791 (glycine 791) interacts with NAD(+). Glycine 791 lines the NADPH pocket.

In the N-terminal section; belongs to the aspartokinase family. The protein in the C-terminal section; belongs to the homoserine dehydrogenase family. Homotetramer. It depends on a metal cation as a cofactor.

It catalyses the reaction L-homoserine + NADP(+) = L-aspartate 4-semialdehyde + NADPH + H(+). The catalysed reaction is L-homoserine + NAD(+) = L-aspartate 4-semialdehyde + NADH + H(+). It carries out the reaction L-aspartate + ATP = 4-phospho-L-aspartate + ADP. It participates in amino-acid biosynthesis; L-lysine biosynthesis via DAP pathway; (S)-tetrahydrodipicolinate from L-aspartate: step 1/4. Its pathway is amino-acid biosynthesis; L-methionine biosynthesis via de novo pathway; L-homoserine from L-aspartate: step 1/3. The protein operates within amino-acid biosynthesis; L-methionine biosynthesis via de novo pathway; L-homoserine from L-aspartate: step 3/3. It functions in the pathway amino-acid biosynthesis; L-threonine biosynthesis; L-threonine from L-aspartate: step 1/5. It participates in amino-acid biosynthesis; L-threonine biosynthesis; L-threonine from L-aspartate: step 3/5. Bifunctional aspartate kinase and homoserine dehydrogenase that catalyzes the first and the third steps toward the synthesis of lysine, methionine and threonine from aspartate. This is Bifunctional aspartokinase/homoserine dehydrogenase 2 (metL) from Escherichia coli (strain K12).